Reading from the N-terminus, the 366-residue chain is Tripartite motif-containing protein 54 (366 aa).

The RING-type zinc finger occupies 26–82 (CPICLEMFSKPVVILPCQHNLCRKCANDVFQASNPLWQSRSSTTVSSGGRFRCPSCR). The B box-type zinc-finger motif lies at 121–163 (EQHLMCEEHEDEKINIYCLSCEVPTCSLCKVFGAHKDCEVAPL). Positions 126, 129, 149, and 155 each coordinate Zn(2+). The segment at 168 to 211 (KRQKSELSDGIAMLVAGNDRVQAVITQMEEVCQTIEENSRRQKQ) is mediates microtubule-binding and homooligomerization. Residues 185–258 (NDRVQAVITQ…LIRQYGDHLE (74 aa)) adopt a coiled-coil conformation. One can recognise a COS domain in the interval 271 to 329 (MEEPQMALYLQQAKELINKVGTMSKVELAGRPEPGYERMDQFTVSVEHVAEMLRTIDFQ). The segment at 326–366 (IDFQPGTSGEEEDEEVAVEGEEGNAGPEEERTDGRESTGQH) is disordered. The span at 334 to 347 (GEEEDEEVAVEGEE) shows a compositional bias: acidic residues. Residues 353–366 (EEERTDGRESTGQH) show a composition bias toward basic and acidic residues.

As to quaternary structure, homooligomer and heterooligomer. Interacts with TRIM63 and probably with TRIM55. Interacts with tubulin.

It is found in the cytoplasm. The protein resides in the cytoskeleton. It localises to the myofibril. Its subcellular location is the sarcomere. The protein localises to the z line. In terms of biological role, may bind and stabilize microtubules during myotubes formation. In Bos taurus (Bovine), this protein is Tripartite motif-containing protein 54 (TRIM54).